A 1058-amino-acid chain; its full sequence is Protein argonaute MEL1 (1058 aa).

Gly residues-rich tracts occupy residues 1–12 (MAYRGGGRGGRG) and 24–37 (DVPG…GGGA). 2 disordered regions span residues 1 to 77 (MAYR…YGAP) and 115 to 147 (RAPP…PSAT). The span at 48–70 (WPPPGMTPRPGPPQPQYPRPGPP) shows a compositional bias: pro residues. Over residues 121-147 (HSSAPAPYQPAAAAPAPSSSSTAPSAT) the composition is skewed to low complexity. The region spanning 407 to 520 (TVIQFVEEFL…LPMEVCKIVE (114 aa)) is the PAZ domain. The 321-residue stretch at 696–1016 (LLIVILPEVS…AAFRARYYVE (321 aa)) folds into the Piwi domain.

The protein belongs to the argonaute family. Ago subfamily.

It localises to the nucleus. The protein localises to the nucleolus. In terms of biological role, essential for the progression of premeiotic mitosis and meiosis during sporogenesis. Regulates the cell division of premeiotic germ cells, the proper modification of meiotic chromosomes, and the faithful progression of meiosis, probably via small RNA-mediated gene silencing. May be involved in histone H3 'Lys-9' demethylation in the pericentromeric region. This chain is Protein argonaute MEL1 (MEL1), found in Oryza sativa subsp. japonica (Rice).